The chain runs to 340 residues: Protein RecA (340 aa).

Position 66-73 (66-73 (GPESSGKT)) interacts with ATP.

The protein belongs to the RecA family.

The protein localises to the cytoplasm. In terms of biological role, can catalyze the hydrolysis of ATP in the presence of single-stranded DNA, the ATP-dependent uptake of single-stranded DNA by duplex DNA, and the ATP-dependent hybridization of homologous single-stranded DNAs. It interacts with LexA causing its activation and leading to its autocatalytic cleavage. This is Protein RecA from Rickettsia prowazekii (strain Madrid E).